Consider the following 294-residue polypeptide: MAMSSGGSGGGVPEQEDSVLFRRGTGQSDDSDIWDDTALIKAYDKAVASFKHALKNGDICETSGKPKTTPKRKPAKKNKSQKKNTAAPLKQWKVGDKCSAIWSEDGCIYPATIASVDFKRETCVVVYTGYGNREEQNLSDLLSPISEVANNIEQNAQENENESQVSTDESENSRSPGSKSDNIKSKSAPWNSFLPPPPPMPGPRLGPGKPGLKFNGPPPPPPPPPPHLLSCWMPPFPSGPPIIPPPPPICPDSLDDADALGSMLISWYMSGYHTGYYMGFRQNQKEGRCSHSLN.

Residues 1–12 (MAMSSGGSGGGV) show a composition bias toward gly residues. The segment at 1–32 (MAMSSGGSGGGVPEQEDSVLFRRGTGQSDDSD) is disordered. Position 2 is an N-acetylalanine (Ala2). A phosphoserine; by PKA mark is found at Ser4, Ser5, and Ser8. The P1 (binding site for GEMIN2) stretch occupies residues 13 to 44 (PEQEDSVLFRRGTGQSDDSDIWDDTALIKAYD). Residue Thr25 is modified to Phosphothreonine. Residues Ser28 and Ser31 each carry the phosphoserine modification. Residue Lys51 forms a Glycyl lysine isopeptide (Lys-Gly) (interchain with G-Cter in SUMO2) linkage. The segment at 58-88 (DICETSGKPKTTPKRKPAKKNKSQKKNTAAP) is disordered. The span at 68 to 82 (TTPKRKPAKKNKSQK) shows a compositional bias: basic residues. Thr69 carries the phosphothreonine modification. At Thr85 the chain carries Phosphothreonine; by PKA. Residues 91-151 (QWKVGDKCSA…LSPISEVANN (61 aa)) form the Tudor domain. The segment at 97 to 209 (KCSAIWSEDG…MPGPRLGPGK (113 aa)) is required for interaction with RPP20/POP7. A compositionally biased stretch (low complexity) spans 156–166 (AQENENESQVS). The tract at residues 156–222 (AQENENESQV…KFNGPPPPPP (67 aa)) is disordered. At Ser187 the chain carries Phosphoserine; by PKA. Residues 194–204 (LPPPPPMPGPR) are compositionally biased toward pro residues. Lys209 participates in a covalent cross-link: Glycyl lysine isopeptide (Lys-Gly) (interchain with G-Cter in SUMO2). Residues 240 to 267 (PPIIPPPPPICPDSLDDADALGSMLISW) form a P2 (binding site for SM B) region. The segment at 279–294 (GFRQNQKEGRCSHSLN) is required for interaction with SYNCRIP.

Belongs to the SMN family. Homooligomer; may form higher order homooligomers in the dimer to octamer range. Part of the core SMN complex that contains SMN1, GEMIN2/SIP1, DDX20/GEMIN3, GEMIN4, GEMIN5, GEMIN6, GEMIN7, GEMIN8 and STRAP/UNRIP. Part of the SMN-Sm complex that contains SMN1, GEMIN2/SIP1, DDX20/GEMIN3, GEMIN4, GEMIN5, GEMIN6, GEMIN7, GEMIN8, STRAP/UNRIP and the Sm proteins SNRPB, SNRPD1, SNRPD2, SNRPD3, SNRPE, SNRPF and SNRPG. Component of an import snRNP complex composed of KPNB1, RNUT1, SMN1 and ZNF259. Interacts with DDX20, FBL, NOLA1, RNUT1, SYNCRIP and with several spliceosomal snRNP core Sm proteins, including SNRPB, SNRPD1, SNRPD2, SNRPD3, SNRPE and ILF3. Interacts with GEMIN2; the interaction is direct. Interacts with GEMIN3; the interaction is direct. Interacts with GEMIN8; the interaction is direct. Interacts with SNRPB; the interaction is direct. Interacts (via Tudor domain) with SNRPD1 (via C-terminus); the interaction is direct. Interacts with SNRPD2; the interaction is direct. Interacts (via Tudor domain) with SNRPD3 (via C-terminus); the interaction is direct. Interacts with SNRPE; the interaction is direct. Interacts with OSTF1, LSM10, LSM11 and RPP20/POP7. Interacts (via C-terminal region) with ZPR1 (via C-terminal region). Interacts (via Tudor domain) with COIL. Interacts with SETX; recruits SETX to POLR2A. Interacts with POLR2A (via the C-terminal domain (CTD)). Interacts with PRMT5. Interacts with XRN2. Interacts (via C-terminus) with FMR1 (via C-terminus); the interaction is direct and occurs in a RNA-independent manner. Interacts (via Tudor domain) with SF3B2 ('Arg-508'-methylated form). Interacts with WRAP53/TCAB1. Interacts (via Tudor domain) with ELAVL4 in an RNA-independent manner; the interaction is required for localization of ELAVL4 to RNA granules. Interacts with FRG1.

It is found in the nucleus. It localises to the gem. The protein localises to the cajal body. The protein resides in the cytoplasm. Its subcellular location is the cytoplasmic granule. It is found in the perikaryon. It localises to the cell projection. The protein localises to the neuron projection. The protein resides in the axon. Its subcellular location is the myofibril. It is found in the sarcomere. It localises to the z line. Its function is as follows. The SMN complex catalyzes the assembly of small nuclear ribonucleoproteins (snRNPs), the building blocks of the spliceosome, and thereby plays an important role in the splicing of cellular pre-mRNAs. Most spliceosomal snRNPs contain a common set of Sm proteins SNRPB, SNRPD1, SNRPD2, SNRPD3, SNRPE, SNRPF and SNRPG that assemble in a heptameric protein ring on the Sm site of the small nuclear RNA to form the core snRNP (Sm core). In the cytosol, the Sm proteins SNRPD1, SNRPD2, SNRPE, SNRPF and SNRPG are trapped in an inactive 6S pICln-Sm complex by the chaperone CLNS1A that controls the assembly of the core snRNP. To assemble core snRNPs, the SMN complex accepts the trapped 5Sm proteins from CLNS1A forming an intermediate. Binding of snRNA inside 5Sm ultimately triggers eviction of the SMN complex, thereby allowing binding of SNRPD3 and SNRPB to complete assembly of the core snRNP. Within the SMN complex, SMN1 acts as a structural backbone and together with GEMIN2 it gathers the Sm complex subunits. Ensures the correct splicing of U12 intron-containing genes that may be important for normal motor and proprioceptive neurons development. Also required for resolving RNA-DNA hybrids created by RNA polymerase II, that form R-loop in transcription terminal regions, an important step in proper transcription termination. May also play a role in the metabolism of small nucleolar ribonucleoprotein (snoRNPs). The chain is Survival motor neuron protein (SMN1) from Macaca fascicularis (Crab-eating macaque).